Reading from the N-terminus, the 152-residue chain is MHPAHLLVLLGVCVSLLGAASIPRPSLNIMLFGNMIQCTIPCEQSWLGYLDYGCYCGSGSSGIPVDDVDKCCKTHDECYYKAGQIPGCSVQPNEVFNVDYSYECNEGQLTCNESNNECEMAVCNCDRAAAICFARFPYNKNYWSINTEIHCR.

The N-terminal stretch at 1-19 (MHPAHLLVLLGVCVSLLGA) is a signal peptide. 7 cysteine pairs are disulfide-bonded: cysteine 38–cysteine 104, cysteine 54–cysteine 151, cysteine 56–cysteine 72, cysteine 71–cysteine 132, cysteine 78–cysteine 125, cysteine 88–cysteine 118, and cysteine 111–cysteine 123. A glycan (N-linked (GlcNAc...) asparagine) is linked at asparagine 112.

Belongs to the phospholipase A2 family. Group I subfamily. D49 sub-subfamily. In terms of assembly, heterohexamer. 2 forms exist: 2 A or 2 B chains, 2 C chains and 2 covalently-linked D chains, and 1 A or 1 B, 1 C, 2 covalently-linked D chains and 2 differentially glycosylated covalently-linked D chains. Textilotoxin was originally described as pentameric. Expressed by the venom gland.

The protein resides in the secreted. Functionally, snake venom oligomeric phospholipase A2 that has potent presynaptic neurotoxicity. Chain D is not itself neurotoxic, but it is essential for the neurotoxicity of textilotoxin. Chain D possesses a very low phospholipase activity. This is Acidic phospholipase A2 homolog textilotoxin D chain from Pseudonaja textilis (Eastern brown snake).